The sequence spans 243 residues: Carboxy-S-adenosyl-L-methionine synthase (243 aa).

Residues Y35, 68–70, 92–93, and R199 contribute to the S-adenosyl-L-methionine site; these read GCS and DN.

It belongs to the class I-like SAM-binding methyltransferase superfamily. Cx-SAM synthase family. Homodimer.

It catalyses the reaction prephenate + S-adenosyl-L-methionine = carboxy-S-adenosyl-L-methionine + 3-phenylpyruvate + H2O. In terms of biological role, catalyzes the conversion of S-adenosyl-L-methionine (SAM) to carboxy-S-adenosyl-L-methionine (Cx-SAM). The chain is Carboxy-S-adenosyl-L-methionine synthase from Helicobacter pylori (strain ATCC 700392 / 26695) (Campylobacter pylori).